The sequence spans 310 residues: Ribosomal RNA small subunit methyltransferase H (310 aa).

S-adenosyl-L-methionine is bound by residues 32 to 34 (GGH), Asp52, Phe79, Asp100, and Gln107.

It belongs to the methyltransferase superfamily. RsmH family.

Its subcellular location is the cytoplasm. It carries out the reaction cytidine(1402) in 16S rRNA + S-adenosyl-L-methionine = N(4)-methylcytidine(1402) in 16S rRNA + S-adenosyl-L-homocysteine + H(+). Its function is as follows. Specifically methylates the N4 position of cytidine in position 1402 (C1402) of 16S rRNA. The chain is Ribosomal RNA small subunit methyltransferase H from Bacillus cereus (strain AH187).